A 784-amino-acid chain; its full sequence is Lon protease (784 aa).

The region spanning 11-204 (IPVLPLRDVV…YLMAMMESEI (194 aa)) is the Lon N-terminal domain. 356–363 (GPPGVGKT) contacts ATP. Positions 592–773 (ENRVGQVTGL…EEVLTLALQN (182 aa)) constitute a Lon proteolytic domain. Catalysis depends on residues S679 and K722.

This sequence belongs to the peptidase S16 family. In terms of assembly, homohexamer. Organized in a ring with a central cavity. ATP binding and hydrolysis do not affect the oligomeric state of the enzyme.

Its subcellular location is the cytoplasm. It carries out the reaction Hydrolysis of proteins in presence of ATP.. Contains an allosteric site (distinct from its active site), whose occupancy by an unfolded polypeptide leads to enzyme activation. ATP-dependent serine protease that mediates the selective degradation of mutant and abnormal proteins as well as certain short-lived regulatory proteins. Required for cellular homeostasis and for survival from DNA damage and developmental changes induced by stress. Degrades polypeptides processively to yield small peptide fragments that are 5 to 10 amino acids long. Binds to DNA in a double-stranded, site-specific manner. Endogenous substrates include the regulatory proteins RcsA and SulA, the transcriptional activator SoxS, and UmuD. Its overproduction specifically inhibits translation through at least two different pathways, one of them being the YoeB-YefM toxin-antitoxin system. The chain is Lon protease from Escherichia coli O6:H1 (strain CFT073 / ATCC 700928 / UPEC).